A 296-amino-acid polypeptide reads, in one-letter code: Tyrosine recombinase XerC (296 aa).

Positions 1-84 (MDKIQETFLY…TLRTFYEFWM (84 aa)) constitute a Core-binding (CB) domain. In terms of domain architecture, Tyr recombinase spans 105-286 (YLPQFFYEEE…SNQQLRKVYL (182 aa)). Active-site residues include Arg145, Lys169, His238, Arg241, and His264. Tyr273 serves as the catalytic O-(3'-phospho-DNA)-tyrosine intermediate.

This sequence belongs to the 'phage' integrase family. XerC subfamily. In terms of assembly, forms a cyclic heterotetrameric complex composed of two molecules of XerC and two molecules of XerD.

The protein localises to the cytoplasm. In terms of biological role, site-specific tyrosine recombinase, which acts by catalyzing the cutting and rejoining of the recombining DNA molecules. The XerC-XerD complex is essential to convert dimers of the bacterial chromosome into monomers to permit their segregation at cell division. It also contributes to the segregational stability of plasmids. The chain is Tyrosine recombinase XerC from Staphylococcus epidermidis (strain ATCC 35984 / DSM 28319 / BCRC 17069 / CCUG 31568 / BM 3577 / RP62A).